The sequence spans 426 residues: Glutamate-1-semialdehyde 2,1-aminomutase (426 aa).

Lysine 268 is modified (N6-(pyridoxal phosphate)lysine).

It belongs to the class-III pyridoxal-phosphate-dependent aminotransferase family. HemL subfamily. The cofactor is pyridoxal 5'-phosphate.

It is found in the cytoplasm. It carries out the reaction (S)-4-amino-5-oxopentanoate = 5-aminolevulinate. It functions in the pathway porphyrin-containing compound metabolism; protoporphyrin-IX biosynthesis; 5-aminolevulinate from L-glutamyl-tRNA(Glu): step 2/2. The protein is Glutamate-1-semialdehyde 2,1-aminomutase of Saccharolobus islandicus (strain M.16.27) (Sulfolobus islandicus).